The following is a 250-amino-acid chain: HLA class II histocompatibility antigen, DO alpha chain (250 aa).

The N-terminal stretch at 1–25 (MALRAGLVLGFHTLMTLLSPQEAGA) is a signal peptide. The tract at residues 26 to 110 (TKADHMGSYG…ERSNRSRAIN (85 aa)) is alpha-1. Over 26 to 217 (TKADHMGSYG…VPIPPPDAME (192 aa)) the chain is Extracellular. Residues asparagine 104 and asparagine 144 are each glycosylated (N-linked (GlcNAc...) asparagine). The interval 111–204 (VPPRVTVLPK…GLDAPLLRHW (94 aa)) is alpha-2. The 93-residue stretch at 113 to 205 (PRVTVLPKSR…LDAPLLRHWE (93 aa)) folds into the Ig-like C1-type domain. Cysteine 133 and cysteine 189 are disulfide-bonded. The interval 205-217 (ELQVPIPPPDAME) is connecting peptide. A helical membrane pass occupies residues 218–240 (TLVCALGLAIGLVGFLVGTVLII). Topologically, residues 241–250 (MGTYVSSVPR) are cytoplasmic.

It belongs to the MHC class II family. In terms of assembly, heterodimer of an alpha chain (DOA) and a beta chain (DOB). Forms a heterotetrameric complex with an HLA-DM molecule during intracellular transport in endosomal/lysosomal compartments in B-cells.

It localises to the endosome membrane. The protein localises to the lysosome membrane. Important modulator in the HLA class II restricted antigen presentation pathway by interaction with the HLA-DM molecule in B-cells. Modifies peptide exchange activity of HLA-DM. The polypeptide is HLA class II histocompatibility antigen, DO alpha chain (HLA-DOA) (Homo sapiens (Human)).